Here is a 346-residue protein sequence, read N- to C-terminus: N-acetyl-gamma-glutamyl-phosphate reductase (346 aa).

Cys151 is a catalytic residue.

The protein belongs to the NAGSA dehydrogenase family. Type 1 subfamily.

It is found in the cytoplasm. It carries out the reaction N-acetyl-L-glutamate 5-semialdehyde + phosphate + NADP(+) = N-acetyl-L-glutamyl 5-phosphate + NADPH + H(+). It functions in the pathway amino-acid biosynthesis; L-arginine biosynthesis; N(2)-acetyl-L-ornithine from L-glutamate: step 3/4. Functionally, catalyzes the NADPH-dependent reduction of N-acetyl-5-glutamyl phosphate to yield N-acetyl-L-glutamate 5-semialdehyde. The sequence is that of N-acetyl-gamma-glutamyl-phosphate reductase from Ehrlichia canis (strain Jake).